The chain runs to 134 residues: Small ribosomal subunit protein uS8 (134 aa).

It belongs to the universal ribosomal protein uS8 family. In terms of assembly, part of the 30S ribosomal subunit. Contacts proteins S5 and S12.

One of the primary rRNA binding proteins, it binds directly to 16S rRNA central domain where it helps coordinate assembly of the platform of the 30S subunit. The protein is Small ribosomal subunit protein uS8 of Thermotoga maritima (strain ATCC 43589 / DSM 3109 / JCM 10099 / NBRC 100826 / MSB8).